Reading from the N-terminus, the 282-residue chain is NADPH-dependent 7-cyano-7-deazaguanine reductase (282 aa).

Residue 88–90 (IES) participates in substrate binding. NADPH is bound at residue 90-91 (SK). The Thioimide intermediate role is filled by cysteine 190. Residue aspartate 197 is the Proton donor of the active site. 229 to 230 (HE) provides a ligand contact to substrate. 258–259 (RG) serves as a coordination point for NADPH.

This sequence belongs to the GTP cyclohydrolase I family. QueF type 2 subfamily. Homodimer.

It localises to the cytoplasm. The enzyme catalyses 7-aminomethyl-7-carbaguanine + 2 NADP(+) = 7-cyano-7-deazaguanine + 2 NADPH + 3 H(+). It functions in the pathway tRNA modification; tRNA-queuosine biosynthesis. Its function is as follows. Catalyzes the NADPH-dependent reduction of 7-cyano-7-deazaguanine (preQ0) to 7-aminomethyl-7-deazaguanine (preQ1). The protein is NADPH-dependent 7-cyano-7-deazaguanine reductase of Escherichia coli O17:K52:H18 (strain UMN026 / ExPEC).